Consider the following 191-residue polypeptide: MKTLLKSIKITLVFCVFFSVFYILVLWLFAQVAGPNRGNAEVVTLNGKVVGAANVGQTFTEEKYFWGRPSCAGDGYDATSSAGSNKGPTNPEYLAEVEARIDTFLIHHPYLARKDVPAEMVTASASGLDPDITPQSAYVQVKRVAQARGMNVEEVRRVVDKAVEKPLLGIFGTEKVNVLKLNIALEELKNR.

A helical transmembrane segment spans residues 10–30 (ITLVFCVFFSVFYILVLWLFA).

It belongs to the KdpC family. As to quaternary structure, the system is composed of three essential subunits: KdpA, KdpB and KdpC.

The protein localises to the cell inner membrane. In terms of biological role, part of the high-affinity ATP-driven potassium transport (or Kdp) system, which catalyzes the hydrolysis of ATP coupled with the electrogenic transport of potassium into the cytoplasm. This subunit acts as a catalytic chaperone that increases the ATP-binding affinity of the ATP-hydrolyzing subunit KdpB by the formation of a transient KdpB/KdpC/ATP ternary complex. The protein is Potassium-transporting ATPase KdpC subunit of Bacteroides fragilis (strain ATCC 25285 / DSM 2151 / CCUG 4856 / JCM 11019 / LMG 10263 / NCTC 9343 / Onslow / VPI 2553 / EN-2).